We begin with the raw amino-acid sequence, 195 residues long: Imidazoleglycerol-phosphate dehydratase (195 aa).

It belongs to the imidazoleglycerol-phosphate dehydratase family.

Its subcellular location is the cytoplasm. The catalysed reaction is D-erythro-1-(imidazol-4-yl)glycerol 3-phosphate = 3-(imidazol-4-yl)-2-oxopropyl phosphate + H2O. Its pathway is amino-acid biosynthesis; L-histidine biosynthesis; L-histidine from 5-phospho-alpha-D-ribose 1-diphosphate: step 6/9. The protein is Imidazoleglycerol-phosphate dehydratase of Azoarcus sp. (strain BH72).